The chain runs to 162 residues: Gas vesicle protein I (162 aa).

The interval 1 to 162 is disordered; it reads MTGKQHQKHE…AERQRGGADE (162 aa). 2 stretches are compositionally biased toward basic and acidic residues: residues 22-37 and 47-64; these read INRDKARSKLLRQREK and RQSEVRRGNQSKAQHDTQ. 2 stretches are compositionally biased toward polar residues: residues 65–74 and 81–110; these read SETQRGTQSK and TGGTKNPTAHSTLPPQKTNAENAVRNSHST. 2 stretches are compositionally biased toward basic and acidic residues: residues 122–142 and 151–162; these read ARERLYGLRLHRETTASEDKS and PKAERQRGGADE.

This sequence belongs to the gas vesicle GvpI family. GvpF to GvpM interact with each other in vitro, and may form multi-subunit complex(es). Interacts with GvpC and GvpO.

The protein resides in the gas vesicle. Functionally, proteins GvpF to GvpM might be involved in nucleating gas vesicle formation. A minor component of the gas vesicle. Gas vesicles are hollow, gas filled proteinaceous nanostructures found in some microorganisms. They allow positioning of halobacteria at the optimal depth for growth in the poorly aerated, shallow brine pools of their habitat. Expression of a 9.5 kb mc-vac DNA fragment containing 2 divergently transcribed regions (gvpD-gvpE-gvpF-gvpG-gvpH-gvpI-gvpJ-gvpK-gvpL-gvpM and gvpA-gvpC-gvpN-gvpO) allows H.volcanii to produce gas vesicles. This Haloferax mediterranei (strain ATCC 33500 / DSM 1411 / JCM 8866 / NBRC 14739 / NCIMB 2177 / R-4) (Halobacterium mediterranei) protein is Gas vesicle protein I.